An 80-amino-acid polypeptide reads, in one-letter code: Exodeoxyribonuclease 7 small subunit (80 aa).

It belongs to the XseB family. In terms of assembly, heterooligomer composed of large and small subunits.

Its subcellular location is the cytoplasm. The catalysed reaction is Exonucleolytic cleavage in either 5'- to 3'- or 3'- to 5'-direction to yield nucleoside 5'-phosphates.. Bidirectionally degrades single-stranded DNA into large acid-insoluble oligonucleotides, which are then degraded further into small acid-soluble oligonucleotides. The protein is Exodeoxyribonuclease 7 small subunit of Vibrio campbellii (strain ATCC BAA-1116).